Reading from the N-terminus, the 293-residue chain is tRNA-cytidine(32) 2-sulfurtransferase (293 aa).

The PP-loop motif motif lies at 62–67 (SGGKDS). The [4Fe-4S] cluster site is built by Cys137, Cys140, and Cys228.

The protein belongs to the TtcA family. As to quaternary structure, homodimer. The cofactor is Mg(2+). Requires [4Fe-4S] cluster as cofactor.

It localises to the cytoplasm. The catalysed reaction is cytidine(32) in tRNA + S-sulfanyl-L-cysteinyl-[cysteine desulfurase] + AH2 + ATP = 2-thiocytidine(32) in tRNA + L-cysteinyl-[cysteine desulfurase] + A + AMP + diphosphate + H(+). It functions in the pathway tRNA modification. Functionally, catalyzes the ATP-dependent 2-thiolation of cytidine in position 32 of tRNA, to form 2-thiocytidine (s(2)C32). The sulfur atoms are provided by the cysteine/cysteine desulfurase (IscS) system. This is tRNA-cytidine(32) 2-sulfurtransferase from Brucella abortus (strain S19).